The primary structure comprises 83 residues: Blackelin-5 (83 aa).

A signal peptide spans 1–24 (MSSGGLLLLLGLLTLWEGLTPVSS). Residues 31 to 81 (CELPADSGSCKGNFQAFYYHPVHRTCLEFIYGGCEGNANNFKTIDECKRTC) enclose the BPTI/Kunitz inhibitor domain. Cystine bridges form between Cys31–Cys81, Cys40–Cys64, and Cys56–Cys77.

The protein localises to the secreted. Its function is as follows. Serine protease inhibitor. The polypeptide is Blackelin-5 (Pseudechis porphyriacus (Red-bellied black snake)).